Reading from the N-terminus, the 216-residue chain is MKVELTAIEARVIGCLIEKEVTTPDQYPLSLNALTNASNQKSNREPVMALSESDVLDAVDALIERRLVSDESAFNSRVSKYQHRFCNTEFGDLKLSEQEKGIICCMLLRGAQTPGEIRTRTNRLATFHDVKEVEAVLEHLASEEKGPLVVKLPREAGKRESRYMHLFCGEVDVSAMAAAVPATSSSSVRIAQLEQEVAELREELDALKAQVESLLS.

It belongs to the UPF0502 family.

This chain is UPF0502 protein VPA1223, found in Vibrio parahaemolyticus serotype O3:K6 (strain RIMD 2210633).